The sequence spans 38 residues: Mating hormone A-factor 2 (38 aa).

Residues 1-12 (MQPITTASTQAT) show a composition bias toward polar residues. A disordered region spans residues 1–20 (MQPITTASTQATQKDKSSEK). Positions 1–23 (MQPITTASTQATQKDKSSEKKDN) are excised as a propeptide. Cysteine 35 is subject to Cysteine methyl ester. Residue cysteine 35 is the site of S-farnesyl cysteine attachment. A propeptide spans 36–38 (VIA) (removed in mature form).

Its subcellular location is the cell membrane. In terms of biological role, the active factor is excreted into the culture medium by haploid cells of the A mating type and acts on cells of the opposite mating type (type alpha). It mediates the conjugation process between the two types by inhibiting the initiation of DNA synthesis in type alpha cells and synchronizing them with type A. The protein is Mating hormone A-factor 2 (MFA2) of Saccharomyces cerevisiae (strain ATCC 204508 / S288c) (Baker's yeast).